Here is a 156-residue protein sequence, read N- to C-terminus: 6,7-dimethyl-8-ribityllumazine synthase (156 aa).

5-amino-6-(D-ribitylamino)uracil-binding positions include F23, 57–59, and 81–83; these read AYE and AII. 86 to 87 is a (2S)-2-hydroxy-3-oxobutyl phosphate binding site; the sequence is GT. Catalysis depends on H89, which acts as the Proton donor. F114 lines the 5-amino-6-(D-ribitylamino)uracil pocket. R128 is a binding site for (2S)-2-hydroxy-3-oxobutyl phosphate.

Belongs to the DMRL synthase family.

It catalyses the reaction (2S)-2-hydroxy-3-oxobutyl phosphate + 5-amino-6-(D-ribitylamino)uracil = 6,7-dimethyl-8-(1-D-ribityl)lumazine + phosphate + 2 H2O + H(+). It functions in the pathway cofactor biosynthesis; riboflavin biosynthesis; riboflavin from 2-hydroxy-3-oxobutyl phosphate and 5-amino-6-(D-ribitylamino)uracil: step 1/2. Catalyzes the formation of 6,7-dimethyl-8-ribityllumazine by condensation of 5-amino-6-(D-ribitylamino)uracil with 3,4-dihydroxy-2-butanone 4-phosphate. This is the penultimate step in the biosynthesis of riboflavin. The polypeptide is 6,7-dimethyl-8-ribityllumazine synthase (Helicobacter acinonychis (strain Sheeba)).